We begin with the raw amino-acid sequence, 355 residues long: Poly(3-hydroxyalkanoate) polymerase subunit PhaC (355 aa).

The region spanning 68–333 (PLLIVYALVN…LAFPGGHIGI (266 aa)) is the AB hydrolase-1 domain. The active site involves C148.

This sequence belongs to the PHA/PHB synthase family. Type III PhaC subfamily. Forms a heterodimer with PhaE, which may multimerize in the presence of 3-hydroxybutyryl-CoA.

The protein resides in the cytoplasm. The catalysed reaction is (3R)-3-hydroxybutanoyl-CoA + [(3R)-hydroxybutanoate](n) = [(3R)-hydroxybutanoate](n+1) + CoA. The protein operates within biopolymer metabolism; poly-(R)-3-hydroxybutanoate biosynthesis. Its function is as follows. Polymerizes D(-)-3-hydroxybutyryl-CoA to create PHB which consists of thousands of hydroxybutyrate molecules linked end to end. PHB serves as an intracellular energy reserve material when cells grow under conditions of nutrient limitation. This Thiocystis violacea protein is Poly(3-hydroxyalkanoate) polymerase subunit PhaC.